The chain runs to 282 residues: Acyl-CoA-binding domain-containing protein 6 (282 aa).

Over residues 1–12 (MASSFLPSGATT) the composition is skewed to polar residues. Residues 1 to 34 (MASSFLPSGATTGDSGGELSSGDDSGDVESLQSP) form a disordered region. Residues 17–31 (GELSSGDDSGDVESL) are compositionally biased toward low complexity. Phosphoserine is present on Ser41. One can recognise an ACB domain in the interval 42–127 (LPELFEKAAE…VKKLDPSWNP (86 aa)). An acyl-CoA-binding positions include 69–73 (YARYK) and Lys95. Ser106 is modified (phosphoserine). Tyr114 lines the an acyl-CoA pocket. ANK repeat units follow at residues 191–220 (EGRT…DINC) and 224–253 (EGQT…DPTL).

Monomer.

The protein localises to the cytoplasm. In terms of biological role, binds long-chain acyl-coenzyme A molecules with a strong preference for unsaturated C18:1-CoA, lower affinity for unsaturated C20:4-CoA, and very weak affinity for saturated C16:0-CoA. Does not bind fatty acids. The protein is Acyl-CoA-binding domain-containing protein 6 (ACBD6) of Bos taurus (Bovine).